We begin with the raw amino-acid sequence, 176 residues long: Large ribosomal subunit protein uL10 (176 aa).

This sequence belongs to the universal ribosomal protein uL10 family. As to quaternary structure, part of the ribosomal stalk of the 50S ribosomal subunit. The N-terminus interacts with L11 and the large rRNA to form the base of the stalk. The C-terminus forms an elongated spine to which L12 dimers bind in a sequential fashion forming a multimeric L10(L12)X complex.

Forms part of the ribosomal stalk, playing a central role in the interaction of the ribosome with GTP-bound translation factors. The protein is Large ribosomal subunit protein uL10 of Saccharophagus degradans (strain 2-40 / ATCC 43961 / DSM 17024).